We begin with the raw amino-acid sequence, 180 residues long: Translation machinery-associated protein 16 homolog (180 aa).

Residues 1 to 12 (MTNLRKELEKCK) are compositionally biased toward basic and acidic residues. The disordered stretch occupies residues 1 to 32 (MTNLRKELEKCKHPNSRKTKALGKKARRQNNK). Residues 13 to 32 (HPNSRKTKALGKKARRQNNK) are compositionally biased toward basic residues.

This sequence belongs to the TMA16 family.

The protein is Translation machinery-associated protein 16 homolog of Drosophila melanogaster (Fruit fly).